Reading from the N-terminus, the 315-residue chain is MPIKIPDQLPAAGVLTEENIFVMTDSRAAHQDIRPLKVLLLNLMPKKIETEIQLMRMLSNSPLQVLVDLLRIDDRESKNTPRIHVETFYQDFDQIKDNKYDGLIITGAPLGLVQFDDVVYWDTLIKIIEWSKKNVTSTLFLCWAAQAALKVLYGLEKQTRGEKLSGVYYHHKLEQQDPLVRGFDDVFLAPHSRYASFEGDFIRANTDLRIFAESEEAGVYLAATKDCRQVFVTGHPEYDAETLHHEYHRDLTAGINPNVPANYYPGNDPARPPYHSWRSHGHLLFSNWLNYYVYQLTPYDLDTLDQKAGGVDWEI.

C142 functions as the Acyl-thioester intermediate in the catalytic mechanism. 2 residues coordinate substrate: K163 and S192. The active-site Proton acceptor is the H235. E237 is an active-site residue. Residue R249 coordinates substrate.

This sequence belongs to the MetA family.

Its subcellular location is the cytoplasm. It carries out the reaction L-homoserine + succinyl-CoA = O-succinyl-L-homoserine + CoA. The protein operates within amino-acid biosynthesis; L-methionine biosynthesis via de novo pathway; O-succinyl-L-homoserine from L-homoserine: step 1/1. Its function is as follows. Transfers a succinyl group from succinyl-CoA to L-homoserine, forming succinyl-L-homoserine. This is Homoserine O-succinyltransferase from Tolumonas auensis (strain DSM 9187 / NBRC 110442 / TA 4).